The primary structure comprises 389 residues: Glutamate 5-kinase (389 aa).

Lys-16 lines the ATP pocket. Substrate contacts are provided by Ser-56, Asp-143, and Asn-155. Residue Ser-175–Asp-176 participates in ATP binding. One can recognise a PUA domain in the interval Ala-281 to Ala-358.

It belongs to the glutamate 5-kinase family.

Its subcellular location is the cytoplasm. The enzyme catalyses L-glutamate + ATP = L-glutamyl 5-phosphate + ADP. The protein operates within amino-acid biosynthesis; L-proline biosynthesis; L-glutamate 5-semialdehyde from L-glutamate: step 1/2. Functionally, catalyzes the transfer of a phosphate group to glutamate to form L-glutamate 5-phosphate. In Rhizobium etli (strain ATCC 51251 / DSM 11541 / JCM 21823 / NBRC 15573 / CFN 42), this protein is Glutamate 5-kinase.